The sequence spans 228 residues: Rab-like protein 2A (228 aa).

GTP contacts are provided by residues 28–35 (GDSAVGKS), 76–80 (DTAGQ), and 133–136 (NKID). The interval 200-228 (LEQEEEDVPDQEQSSSIETPSEEVASPHS) is disordered.

Belongs to the small GTPase superfamily. Rab family. Interacts with IFT27, IFT81, IFT172, ATP6V1E1, HK1, LDHC, MAPRE1 and HSPA2. Expressed in the testis.

In terms of biological role, plays an essential role in male fertility, sperm intra-flagellar transport, and tail assembly. Binds, in a GTP-regulated manner, to a specific set of effector proteins including key proteins involved in cilia development and function and delivers them into the growing sperm tail. The chain is Rab-like protein 2A (RABL2A) from Homo sapiens (Human).